Here is a 201-residue protein sequence, read N- to C-terminus: Holliday junction branch migration complex subunit RuvA (201 aa).

Residues 1–63 (MYDYIKGTVT…EDNISLFGFQ (63 aa)) are domain I. Residues 64–142 (TTEERYLFKK…DVVASEIVYV (79 aa)) are domain II. The interval 143–153 (APENDMVAGLS) is flexible linker. The segment at 153-201 (SPQLEEAVLALEALGYSTRELKKVIPKLAKEADLTSDAYIKLALQLMTK) is domain III.

It belongs to the RuvA family. In terms of assembly, homotetramer. Forms an RuvA(8)-RuvB(12)-Holliday junction (HJ) complex. HJ DNA is sandwiched between 2 RuvA tetramers; dsDNA enters through RuvA and exits via RuvB. An RuvB hexamer assembles on each DNA strand where it exits the tetramer. Each RuvB hexamer is contacted by two RuvA subunits (via domain III) on 2 adjacent RuvB subunits; this complex drives branch migration. In the full resolvosome a probable DNA-RuvA(4)-RuvB(12)-RuvC(2) complex forms which resolves the HJ.

The protein localises to the cytoplasm. The RuvA-RuvB-RuvC complex processes Holliday junction (HJ) DNA during genetic recombination and DNA repair, while the RuvA-RuvB complex plays an important role in the rescue of blocked DNA replication forks via replication fork reversal (RFR). RuvA specifically binds to HJ cruciform DNA, conferring on it an open structure. The RuvB hexamer acts as an ATP-dependent pump, pulling dsDNA into and through the RuvAB complex. HJ branch migration allows RuvC to scan DNA until it finds its consensus sequence, where it cleaves and resolves the cruciform DNA. The polypeptide is Holliday junction branch migration complex subunit RuvA (Listeria monocytogenes serovar 1/2a (strain ATCC BAA-679 / EGD-e)).